Here is an 89-residue protein sequence, read N- to C-terminus: Small ribosomal subunit protein uS15 (89 aa).

The protein belongs to the universal ribosomal protein uS15 family. In terms of assembly, part of the 30S ribosomal subunit. Forms a bridge to the 50S subunit in the 70S ribosome, contacting the 23S rRNA.

Its function is as follows. One of the primary rRNA binding proteins, it binds directly to 16S rRNA where it helps nucleate assembly of the platform of the 30S subunit by binding and bridging several RNA helices of the 16S rRNA. In terms of biological role, forms an intersubunit bridge (bridge B4) with the 23S rRNA of the 50S subunit in the ribosome. This is Small ribosomal subunit protein uS15 from Streptococcus pneumoniae (strain P1031).